Reading from the N-terminus, the 87-residue chain is Large ribosomal subunit protein bL27 (87 aa).

The segment at 1 to 21 is disordered; sequence MAHKKGGGSTRNGRDSASKRL.

It belongs to the bacterial ribosomal protein bL27 family.

The polypeptide is Large ribosomal subunit protein bL27 (Amoebophilus asiaticus (strain 5a2)).